A 341-amino-acid polypeptide reads, in one-letter code: 5-formaminoimidazole-4-carboxamide-1-(beta)-D-ribofuranosyl 5'-monophosphate synthetase (341 aa).

2 residues coordinate 5-amino-1-(5-phospho-beta-D-ribosyl)imidazole-4-carboxamide: H27 and S92. The region spanning 113–328 (RELLRWEADQ…MGERIAHEIK (216 aa)) is the ATP-grasp domain. ATP-binding positions include 143–195 (AEEV…VPAY) and E217. Position 237 (N237) interacts with 5-amino-1-(5-phospho-beta-D-ribosyl)imidazole-4-carboxamide. Residues E276 and E289 each contribute to the Mg(2+) site.

The protein belongs to the phosphohexose mutase family. Requires Mg(2+) as cofactor. The cofactor is Mn(2+).

It carries out the reaction 5-amino-1-(5-phospho-beta-D-ribosyl)imidazole-4-carboxamide + formate + ATP = 5-formamido-1-(5-phospho-D-ribosyl)imidazole-4-carboxamide + ADP + phosphate. The protein operates within purine metabolism; IMP biosynthesis via de novo pathway; 5-formamido-1-(5-phospho-D-ribosyl)imidazole-4-carboxamide from 5-amino-1-(5-phospho-D-ribosyl)imidazole-4-carboxamide (formate route): step 1/1. Catalyzes the ATP- and formate-dependent formylation of 5-aminoimidazole-4-carboxamide-1-beta-d-ribofuranosyl 5'-monophosphate (AICAR) to 5-formaminoimidazole-4-carboxamide-1-beta-d-ribofuranosyl 5'-monophosphate (FAICAR) in the absence of folates. This chain is 5-formaminoimidazole-4-carboxamide-1-(beta)-D-ribofuranosyl 5'-monophosphate synthetase, found in Pyrobaculum aerophilum (strain ATCC 51768 / DSM 7523 / JCM 9630 / CIP 104966 / NBRC 100827 / IM2).